Consider the following 275-residue polypeptide: Ribosomal RNA small subunit methyltransferase A (275 aa).

Positions 21, 23, 48, 69, 94, and 115 each coordinate S-adenosyl-L-methionine.

It belongs to the class I-like SAM-binding methyltransferase superfamily. rRNA adenine N(6)-methyltransferase family. RsmA subfamily.

It localises to the cytoplasm. It carries out the reaction adenosine(1518)/adenosine(1519) in 16S rRNA + 4 S-adenosyl-L-methionine = N(6)-dimethyladenosine(1518)/N(6)-dimethyladenosine(1519) in 16S rRNA + 4 S-adenosyl-L-homocysteine + 4 H(+). In terms of biological role, specifically dimethylates two adjacent adenosines (A1518 and A1519) in the loop of a conserved hairpin near the 3'-end of 16S rRNA in the 30S particle. May play a critical role in biogenesis of 30S subunits. The polypeptide is Ribosomal RNA small subunit methyltransferase A (Clostridium botulinum (strain ATCC 19397 / Type A)).